Reading from the N-terminus, the 192-residue chain is MNTDDVLAVFREAGAILEGHFILTSGLRSPVFLQKARVFMHADKTEKLCKALAEKIRAADLGPIDYVVGPAIGGLIPSYETSRHLGVPSVWVERENGVFRLRRFDVPKGARVVIVEDIVTTGLSIRETIDCMKDLGIEVVAAACIVDRSAGKADVGTRLISLAEYEVPAYPADKLPPELAAIPAVKPGSRNI.

116 to 124 (EDIVTTGLS) contacts 5-phospho-alpha-D-ribose 1-diphosphate. Residues Thr-120 and Arg-148 each contribute to the orotate site.

Belongs to the purine/pyrimidine phosphoribosyltransferase family. PyrE subfamily. In terms of assembly, homodimer. It depends on Mg(2+) as a cofactor.

It carries out the reaction orotidine 5'-phosphate + diphosphate = orotate + 5-phospho-alpha-D-ribose 1-diphosphate. It participates in pyrimidine metabolism; UMP biosynthesis via de novo pathway; UMP from orotate: step 1/2. In terms of biological role, catalyzes the transfer of a ribosyl phosphate group from 5-phosphoribose 1-diphosphate to orotate, leading to the formation of orotidine monophosphate (OMP). The sequence is that of Orotate phosphoribosyltransferase from Brucella abortus (strain S19).